The sequence spans 244 residues: Flavin-dependent thymidylate synthase (244 aa).

The region spanning 17–239 (ITVELVKHSA…PETHAAFEKQ (223 aa)) is the ThyX domain. FAD contacts are provided by residues Ser68, 91 to 93 (RHR), and Glu99. Residues 88 to 91 (EFMR), 99 to 103 (EESGR), and Arg171 each bind dUMP. The ThyX motif motif lies at 91–101 (RHRIASYNEES). FAD is bound by residues 187–189 (NAR) and Asn193. Position 198 (Arg198) interacts with dUMP. Arg198 serves as the catalytic Involved in ionization of N3 of dUMP, leading to its activation.

It belongs to the thymidylate synthase ThyX family. As to quaternary structure, homotetramer. Requires FAD as cofactor.

It carries out the reaction dUMP + (6R)-5,10-methylene-5,6,7,8-tetrahydrofolate + NADPH + H(+) = dTMP + (6S)-5,6,7,8-tetrahydrofolate + NADP(+). Its pathway is pyrimidine metabolism; dTTP biosynthesis. Its function is as follows. Catalyzes the reductive methylation of 2'-deoxyuridine-5'-monophosphate (dUMP) to 2'-deoxythymidine-5'-monophosphate (dTMP) while utilizing 5,10-methylenetetrahydrofolate (mTHF) as the methyl donor, and NADPH and FADH(2) as the reductant. The sequence is that of Flavin-dependent thymidylate synthase from Tropheryma whipplei (strain Twist) (Whipple's bacillus).